We begin with the raw amino-acid sequence, 73 residues long: Protein SlyX homolog (73 aa).

This sequence belongs to the SlyX family.

The chain is Protein SlyX homolog from Haemophilus ducreyi (strain 35000HP / ATCC 700724).